Here is a 310-residue protein sequence, read N- to C-terminus: 5'-adenylylsulfate reductase-like 4 (310 aa).

An N-terminal signal peptide occupies residues 1-22; sequence MEKEILLLLLVIMFLTVADVDA. A Thioredoxin domain is found at 49–168; that stretch reads GVESDERPRF…LVAFYSDVTG (120 aa). N-linked (GlcNAc...) asparagine glycans are attached at residues N143 and N190. The chain crosses the membrane as a helical span at residues 217 to 237; it reads LAIVFVLLRLLHLIYPTLVVF.

It is found in the membrane. The polypeptide is 5'-adenylylsulfate reductase-like 4 (APRL4) (Arabidopsis thaliana (Mouse-ear cress)).